Reading from the N-terminus, the 175-residue chain is Shikimate kinase (175 aa).

10-15 (GAGKTT) is a binding site for ATP. Position 14 (T14) interacts with Mg(2+). Residues D32, R56, and G78 each contribute to the substrate site. R116 is a binding site for ATP. R135 is a binding site for substrate.

This sequence belongs to the shikimate kinase family. As to quaternary structure, monomer. Mg(2+) serves as cofactor.

It is found in the cytoplasm. The catalysed reaction is shikimate + ATP = 3-phosphoshikimate + ADP + H(+). It functions in the pathway metabolic intermediate biosynthesis; chorismate biosynthesis; chorismate from D-erythrose 4-phosphate and phosphoenolpyruvate: step 5/7. Its function is as follows. Catalyzes the specific phosphorylation of the 3-hydroxyl group of shikimic acid using ATP as a cosubstrate. This is Shikimate kinase from Aromatoleum aromaticum (strain DSM 19018 / LMG 30748 / EbN1) (Azoarcus sp. (strain EbN1)).